Here is a 386-residue protein sequence, read N- to C-terminus: 2-deoxy-scyllo-inosose synthase (386 aa).

NAD(+) contacts are provided by residues D42, 73–76 (EEHK), 105–109 (GVTGN), 129–130 (TT), 140–142 (SLK), and 151–152 (KN). K142 is an active-site residue. E184 is a Co(2+) binding site. Residue E244 is part of the active site. Residues H247 and H263 each coordinate Co(2+).

It belongs to the sugar phosphate cyclases superfamily. DOI synthase family. NAD(+) is required as a cofactor. Requires Co(2+) as cofactor.

It catalyses the reaction D-glucose 6-phosphate = 2-deoxy-L-scyllo-inosose + phosphate. It participates in metabolic intermediate biosynthesis; 2-deoxystreptamine biosynthesis; 2-deoxystreptamine from D-glucose 6-phosphate: step 1/4. It functions in the pathway antibiotic biosynthesis; tobramycin biosynthesis. In terms of biological role, catalyzes the intramolecular carbocycle formation from D-glucose-6-phosphate to 2-deoxy-scyllo-inosose (DOI). The chain is 2-deoxy-scyllo-inosose synthase (tbmA) from Streptoalloteichus tenebrarius (strain ATCC 17920 / DSM 40477 / JCM 4838 / CBS 697.72 / NBRC 16177 / NCIMB 11028 / NRRL B-12390 / A12253. 1 / ISP 5477) (Streptomyces tenebrarius).